A 419-amino-acid chain; its full sequence is MKYLIRARLEVDGRVEKHDVIGAIFGQTESLLGSDFSLEELQNKDKLGRIHVELKYQGTKTIGSISVPSNLSRVETAIIAAMLETIDKIGPYPAKITIEEIRDLRLERLEKIKQRARELLRLMKEKEPDIREIIREVLQEEQAKAQVAKLVEYGPERLPAGPGVEKADTIIVVEGRSDVNTLLRYGYTNVIALGGAREKVPETIKRLAEQKKVILFVDGDRGGELILKNVLPQMKVDYVARAPEGREVESLTGREIAQALSQMKPAEIVARELGIEAAEKPAEEAVKREEEAAAEAKPPAPAVQEKAAKPPEEKPPTVKFTIPKAVLEAAKELRGTLEAIVYDKEWRELDRLKVRELYDYISKSEPGRIYAVVFDGIITQRLLDIASEKGVGIIIGNRIGNKITHKPTNVKFLTFSDLF.

A Toprim domain is found at 168 to 244 (DTIIVVEGRS…KVDYVARAPE (77 aa)). Residues Glu-174, Asp-218, and Asp-220 each contribute to the Mg(2+) site. Basic and acidic residues-rich tracts occupy residues 280–291 (KPAEEAVKREEE) and 306–316 (KAAKPPEEKPP). Positions 280–317 (KPAEEAVKREEEAAAEAKPPAPAVQEKAAKPPEEKPPT) are disordered.

Belongs to the archaeal DnaG primase family. In terms of assembly, forms a ternary complex with MCM helicase and DNA. Component of the archaeal exosome complex. It depends on Mg(2+) as a cofactor.

The enzyme catalyses ssDNA + n NTP = ssDNA/pppN(pN)n-1 hybrid + (n-1) diphosphate.. Functionally, RNA polymerase that catalyzes the synthesis of short RNA molecules used as primers for DNA polymerase during DNA replication. Also part of the exosome, which is a complex involved in RNA degradation. Acts as a poly(A)-binding protein that enhances the interaction between heteromeric, adenine-rich transcripts and the exosome. The chain is DNA primase DnaG from Aeropyrum pernix (strain ATCC 700893 / DSM 11879 / JCM 9820 / NBRC 100138 / K1).